Reading from the N-terminus, the 448-residue chain is UDP-N-acetylmuramate--L-alanine ligase (448 aa).

118-124 (GTHGKTT) contacts ATP.

Belongs to the MurCDEF family.

It localises to the cytoplasm. The catalysed reaction is UDP-N-acetyl-alpha-D-muramate + L-alanine + ATP = UDP-N-acetyl-alpha-D-muramoyl-L-alanine + ADP + phosphate + H(+). It participates in cell wall biogenesis; peptidoglycan biosynthesis. Cell wall formation. The polypeptide is UDP-N-acetylmuramate--L-alanine ligase (Flavobacterium psychrophilum (strain ATCC 49511 / DSM 21280 / CIP 103535 / JIP02/86)).